The primary structure comprises 1393 residues: MAGCHCPPAGDCPPVAPCTFSTPFNIGATLAPTGRLLSTIEMSSHRCMFDYFKQFSSDDNGRYAAQFDLLLGTYCNTLSLIRFLETGLSVACVCTRAPDLMYMREGTVQFEIQQPMIAREGPHPADQPIHTYMVKRLCRRSLSAAFVVAAEALALLSEVSLDGTAISTHLRMRAIQQLARNVRTILDSFERGTVDQMLRILLEKAPPAPLLIPLSRSQAEGRIAGQVMRANLVSELKRTVRTESFIMNKTNANRDTIISFLTKMVNCTHQTISMPRLTHSDSKGRLVDGVLVTTTMVRQKLLSGILDVVDTSARVPVTYGEMIISGTNLVTAVVMGKAVRNMDDIARYILNLKEDNIIDRTDEIVRGDDDRPQTAEISAELVTIGDKLIFLESMERRVYQATQVQYPLIGHVDLTFIMPLGIYQKRGDRYARHIGDYAPGPGCNVGDIRIFPPREIYFYNKDNQVISLSLSDAIGTLCHSSFLDVEATVGNLRNGKYTLSCVLGAYVTNPPALPLADASRQFFENIGEFLRDPPRWIDECHMTVEQFLSTGNPYLSMELHPAFDFFVVPGDVDLPGPHNVPQVMASISASLRVCNCNIPLPLCNSDFRDALGQELASTHHKMSDATINAVSATFSDISYPTAFYIIEAVIHGSERNFGLLMRLVIQCIRSYWDNCKRVAFVNNFHMVAFIDTYLCSGELPEECTNVYKDLMHHVRALRSIVRNYTVQTDPLYGQSHEELNHVLIDRTILPPLLWDCDPLIYQAEGMRDRDLYLNVGSENNYAVRPWLELQDADFQRTGNVLIHNRPIRDADRQTFVPHHAQEWTTLSKIYYYVMVPSFSRGQCCTMGIRFDNIYATSQSVIIPDLQPDEEPPLGPEDPRHPLNGRNLVPNTFNVMLHNARISVDADALLTLQETVNNMAERTTAILYGSTPDIGSSSSSTRHMRTFDGALHHGLLMMAYPCNDETVAAGTYFYPVPVNALFACHDHLAAVRDLPGNSRTLLYRAPPVPPFLGANYYSTFRQPVAQYVKESRCGPNEISYALMAGYFKLSPIGLYHQLRTGLHPGIAFTVIRQDRFLADMGLFAERASESYFLGQVSVTKRPHAGGVQFSLTQPRANVDLGVGYTATCTPLLLRNAITDMGNTVQSLHLTRGSPPLLHQEADEFLRKVTTRGQRAAPQRTVPFLGTLMPNLPSGLEHGQMSICEFIPTPVSADLEYFRTPCNPRGRAAGAIHSGEEASDIDDVMYDHQQGDPAYPFRATNNPWASQRLSYADKLYNGVYNLSGASPLFSPTYKFFTPAEVCCKTRCLDKLIGEAGSALASFASDGEVQFKRPIGSTELTEDPCSLFQEAYPILCATDKALLRAYSTGTTDNPETHLAQYLIRDASPIGGCLPIC.

It belongs to the herpesviridae major capsid protein family. Homomultimer. Makes the hexons and eleven out of twelve pentons. Interacts with triplex proteins 1/TRX1 and 2/TRX2; adjacent capsomers are linked together in groups of three by triplexes, heterotrimeric complexes composed of one molecule of TRX1 and two molecules of TRX2. Interacts with scaffold protein; this interaction allows efficient MCP transport to the host nucleus. Interacts with capsid vertex component 2/CVC2. Interacts with the small capsomere-interacting protein/SCP.

The protein localises to the virion. It localises to the host nucleus. Its function is as follows. Self-assembles to form an icosahedral capsid with a T=16 symmetry, about 200 nm in diameter, and consisting of 150 hexons and 12 pentons (total of 162 capsomers). Hexons form the edges and faces of the capsid and are each composed of six MCP molecules. In contrast, one penton is found at each of the 12 vertices. Eleven of the pentons are MCP pentamers, while the last vertex is occupied by the portal complex. The capsid is surrounded by a layer of proteinaceous material designated the tegument which, in turn, is enclosed in an envelope of host cell-derived lipids containing virus-encoded glycoproteins. The sequence is that of Major capsid protein from Gallus gallus (Chicken).